A 466-amino-acid polypeptide reads, in one-letter code: Triplex capsid protein 1 (466 aa).

A disordered region spans residues 1-29; that stretch reads MKTKPLPTAPMAWAESAVETTTSPRELAG.

Belongs to the herpesviridae TRX1 protein family. Interacts with TRX2, MCP and capsid vertex component 2/CVC2.

It localises to the virion. It is found in the host nucleus. Its function is as follows. Structural component of the T=16 icosahedral capsid. The capsid is composed of pentamers and hexamers of major capsid protein/MCP, which are linked together by heterotrimers called triplexes. These triplexes are formed by a single molecule of triplex protein 1/TRX1 and two copies of triplex protein 2/TRX2. Additionally, TRX1 is required for efficient transport of TRX2 to the nucleus, which is the site of capsid assembly. The chain is Triplex capsid protein 1 from Homo sapiens (Human).